We begin with the raw amino-acid sequence, 110 residues long: Cysteine-rich and transmembrane domain-containing protein 1 (110 aa).

Positions Met1 to Pro18 are enriched in pro residues. Residues Met1–Ala45 form a disordered region. The segment covering Tyr19–Pro29 has biased composition (low complexity). A helical membrane pass occupies residues Ser87–Cys104.

This sequence belongs to the CYSTM1 family.

The protein localises to the membrane. The protein is Cysteine-rich and transmembrane domain-containing protein 1 (cystm1) of Xenopus tropicalis (Western clawed frog).